The chain runs to 386 residues: Sphingosine 1-phosphate receptor 4 (386 aa).

Residues 1 to 56 (MNISTWSTLVTPESCHRLAASGHSLLIVLHYNHSGRLASRGGSEDGGGLGMLRGPS) lie on the Extracellular side of the membrane. N-linked (GlcNAc...) asparagine glycosylation is found at N2 and N32. A helical transmembrane segment spans residues 57–77 (VAAGCLVVLENAMVLAAIAIY). At 78–87 (MRSRRWVYYC) the chain is on the cytoplasmic side. A helical transmembrane segment spans residues 88-108 (LLNITLSDLLTGLAYVVNVLL). The Extracellular portion of the chain corresponds to 109–120 (SGTRTFQLSPVH). The chain crosses the membrane as a helical span at residues 121-141 (WFLREGLLFMALAASTFSLLF). Over 142–163 (TAGERFATMVRVAESGATKTSR) the chain is Cytoplasmic. The chain crosses the membrane as a helical span at residues 164 to 184 (VYGCIGLCWLLAAILGLLPLL). Residues 185–208 (GWNCVCAFPRCSSLLPLYSKGYVL) lie on the Extracellular side of the membrane. The chain crosses the membrane as a helical span at residues 209 to 229 (FCVVVFALILVAILSLYGAIF). At 230–254 (RVVRANGQKSPRPPARRKSRRLLNT) the chain is on the cytoplasmic side. A helical transmembrane segment spans residues 255-275 (VLMILVAFVVCWGPLFGLLLA). Residues 276 to 290 (DIFGSNVWAQEYLRG) are Extracellular-facing. Residues 291-311 (MDWILALAVFNSAINPLIYSF) traverse the membrane as a helical segment. Residues 312 to 386 (RSREVQRAVL…LSSISSVRST (75 aa)) lie on the Cytoplasmic side of the membrane. C325 carries the S-palmitoyl cysteine lipid modification.

Belongs to the G-protein coupled receptor 1 family. As to expression, specifically expressed in fetal and adult lymphoid and hematopoietic tissue. Expressed in lung, spleen, thymus and lymph node but absent in other non-lymphatic tissue. Coexpressed with GNA15 at the same relative levels in all tissues examined, with the highest levels in adult spleen and lung.

The protein resides in the cell membrane. In terms of biological role, receptor for the lysosphingolipid sphingosine 1-phosphate (S1P). S1P is a bioactive lysophospholipid that elicits diverse physiological effect on most types of cells and tissues. May be involved in cell migration processes that are specific for lymphocytes. This chain is Sphingosine 1-phosphate receptor 4 (S1pr4), found in Mus musculus (Mouse).